We begin with the raw amino-acid sequence, 108 residues long: UPF0060 membrane protein SAR2425 (108 aa).

Helical transmembrane passes span 5 to 25 (IFIF…IWLW), 31 to 51 (SSLV…IATF), 60 to 80 (VYAA…MVVD), and 86 to 106 (KYDV…LLPS).

This sequence belongs to the UPF0060 family.

The protein localises to the cell membrane. The polypeptide is UPF0060 membrane protein SAR2425 (Staphylococcus aureus (strain MRSA252)).